The chain runs to 235 residues: Large ribosomal subunit protein uL1 (235 aa).

Belongs to the universal ribosomal protein uL1 family. In terms of assembly, part of the 50S ribosomal subunit.

Binds directly to 23S rRNA. The L1 stalk is quite mobile in the ribosome, and is involved in E site tRNA release. Its function is as follows. Protein L1 is also a translational repressor protein, it controls the translation of the L11 operon by binding to its mRNA. This is Large ribosomal subunit protein uL1 from Corynebacterium diphtheriae (strain ATCC 700971 / NCTC 13129 / Biotype gravis).